We begin with the raw amino-acid sequence, 326 residues long: tRNA(Ile)-lysidine synthase (326 aa).

33–38 (SGGPDS) serves as a coordination point for ATP.

The protein belongs to the tRNA(Ile)-lysidine synthase family.

The protein resides in the cytoplasm. The catalysed reaction is cytidine(34) in tRNA(Ile2) + L-lysine + ATP = lysidine(34) in tRNA(Ile2) + AMP + diphosphate + H(+). Ligates lysine onto the cytidine present at position 34 of the AUA codon-specific tRNA(Ile) that contains the anticodon CAU, in an ATP-dependent manner. Cytidine is converted to lysidine, thus changing the amino acid specificity of the tRNA from methionine to isoleucine. In Novosphingobium aromaticivorans (strain ATCC 700278 / DSM 12444 / CCUG 56034 / CIP 105152 / NBRC 16084 / F199), this protein is tRNA(Ile)-lysidine synthase.